Here is a 165-residue protein sequence, read N- to C-terminus: Pyruvoyl-dependent arginine decarboxylase (165 aa).

Ser53 is subject to Pyruvic acid (Ser).

The protein belongs to the PdaD family. Pyruvate is required as a cofactor.

The enzyme catalyses L-arginine + H(+) = agmatine + CO2. The chain is Pyruvoyl-dependent arginine decarboxylase from Methanococcus aeolicus (strain ATCC BAA-1280 / DSM 17508 / OCM 812 / Nankai-3).